A 338-amino-acid polypeptide reads, in one-letter code: uncharacterized protein (338 aa).

This is an uncharacterized protein from Thermoproteus tenax (TTV1).